A 205-amino-acid chain; its full sequence is Proteasome subunit beta type-3 (205 aa).

A Phosphoserine modification is found at S31. Residue K70 forms a Glycyl lysine isopeptide (Lys-Gly) (interchain with G-Cter in ubiquitin) linkage.

The protein belongs to the peptidase T1B family. As to quaternary structure, the 26S proteasome consists of a 20S proteasome core and two 19S regulatory subunits. The 20S proteasome core is composed of 28 subunits that are arranged in four stacked rings, resulting in a barrel-shaped structure. The two end rings are each formed by seven alpha subunits, and the two central rings are each formed by seven beta subunits. The catalytic chamber with the active sites is on the inside of the barrel.

The protein localises to the cytoplasm. It is found in the nucleus. In terms of biological role, non-catalytic component of the proteasome which degrades poly-ubiquitinated proteins in the cytoplasm and in the nucleus. It is essential for the regulated turnover of proteins and for the removal of misfolded proteins. The proteasome is a multicatalytic proteinase complex that is characterized by its ability to cleave peptides with Arg, Phe, Tyr, Leu, and Glu adjacent to the leaving group at neutral or slightly basic pH. It has an ATP-dependent proteolytic activity. This subunit may participate in the trypsin-like activity of the enzyme complex. The sequence is that of Proteasome subunit beta type-3 (PUP3) from Saccharomyces cerevisiae (strain ATCC 204508 / S288c) (Baker's yeast).